Consider the following 228-residue polypeptide: Auxin-responsive protein IAA16 (228 aa).

The EAR-like (transcriptional repression) motif lies at 19–23 (LSLAL). The span at 28–39 (SSSGLQGNTSTA) shows a compositional bias: polar residues. Disordered regions lie at residues 28–57 (SSSGLQGNTSTAADGAKGNDGFKASRPAAP) and 70–90 (NLASSSSSSKPPRGGRDAAAA). One can recognise a PB1 domain in the interval 97–214 (ARFVKVNMDG…RVLRSSDLNA (118 aa)).

The protein belongs to the Aux/IAA family. In terms of assembly, homodimers and heterodimers. As to expression, expressed in roots, flowers and seedlings.

It is found in the nucleus. Aux/IAA proteins are short-lived transcriptional factors that function as repressors of early auxin response genes at low auxin concentrations. The protein is Auxin-responsive protein IAA16 (IAA16) of Oryza sativa subsp. japonica (Rice).